Consider the following 216-residue polypeptide: Homologous-pairing protein 2 (216 aa).

This sequence belongs to the HOP2 family. In terms of assembly, interacts with mcp7.

The protein resides in the nucleus. Its function is as follows. Required for proper homologous pairing and efficient cross-over and intragenic recombination during meiosis. Acts indirectly in a process facilitating homologous recombination. Acts during mid- to late-horse-tail period. This chain is Homologous-pairing protein 2 (meu13), found in Schizosaccharomyces pombe (strain 972 / ATCC 24843) (Fission yeast).